We begin with the raw amino-acid sequence, 239 residues long: Fatty acid metabolism regulator protein (239 aa).

Positions 6–74 constitute an HTH gntR-type domain; sequence QSPAGFAEEY…HGKPTQVNNF (69 aa). A DNA-binding region (H-T-H motif) is located at residues 34 to 53; it reads ERELSELIGVTRTTLREVLQ.

As to quaternary structure, homodimer.

The protein resides in the cytoplasm. Multifunctional regulator of fatty acid metabolism. The chain is Fatty acid metabolism regulator protein from Edwardsiella ictaluri (strain 93-146).